A 32-amino-acid chain; its full sequence is Photosystem II reaction center protein T (32 aa).

A helical membrane pass occupies residues 3–23 (ALVYTFLLIGTLVVIFFAIFF).

Belongs to the PsbT family. PSII is composed of 1 copy each of membrane proteins PsbA, PsbB, PsbC, PsbD, PsbE, PsbF, PsbH, PsbI, PsbJ, PsbK, PsbL, PsbM, PsbT, PsbX, PsbY, PsbZ, Psb30/Ycf12, at least 3 peripheral proteins of the oxygen-evolving complex and a large number of cofactors. It forms dimeric complexes.

Its subcellular location is the plastid. The protein resides in the chloroplast thylakoid membrane. Found at the monomer-monomer interface of the photosystem II (PS II) dimer, plays a role in assembly and dimerization of PSII. PSII is a light-driven water plastoquinone oxidoreductase, using light energy to abstract electrons from H(2)O, generating a proton gradient subsequently used for ATP formation. The polypeptide is Photosystem II reaction center protein T (Emiliania huxleyi (Coccolithophore)).